We begin with the raw amino-acid sequence, 107 residues long: MSTKSKDQHARVSYLYQASQLLFRNVQEPTLSRHYISTAKDVSQKSVMRIHPDIKRTICKGCNSLLVPGKSCSIRFEEPSRKNPSIDRVLWICKKCAFKKRFSDKSC.

Residues C59, C62, C93, and C96 each contribute to the Zn(2+) site.

The protein belongs to the eukaryotic/archaeal RNase P protein component 4 family. The cofactor is Zn(2+).

Its subcellular location is the cytoplasm. The protein resides in the nucleus. The enzyme catalyses Endonucleolytic cleavage of RNA, removing 5'-extranucleotides from tRNA precursor.. In terms of biological role, component of ribonuclease P, a protein complex that generates mature tRNA molecules by cleaving their 5'-ends. In Schizosaccharomyces pombe (strain 972 / ATCC 24843) (Fission yeast), this protein is Ribonuclease P protein subunit rpr2 (rpr2).